A 394-amino-acid polypeptide reads, in one-letter code: Proliferation-associated protein 2G4 (394 aa).

N-acetylserine is present on Ser2. A Phosphoserine modification is found at Ser2. The segment at 2–48 (SGEDEQQEQTIAEDLVVTKYKMGGDIANRVLRSLVEASSSGVSVLSL) is necessary for nucleolar localization. The tract at residues 46–54 (LSLCEKGDA) is RNA-binding. Lys298 is covalently cross-linked (Glycyl lysine isopeptide (Lys-Gly) (interchain with G-Cter in SUMO2)). Positions 301–394 (LLQPFNVLYE…ETLEENGAGD (94 aa)) are necessary for nucleolar localization. Residue Ser335 is modified to Phosphoserine. Residues 358-394 (LQSSASRKTQKKKKKKASKTAENATSGETLEENGAGD) form a disordered region. Ser361 bears the Phosphoserine; by PKC/PRKCD mark. Residues 361–375 (SASRKTQKKKKKKAS) form an interaction with RNA region. Residues 365–375 (KTQKKKKKKAS) are compositionally biased toward basic residues. Thr366 and Thr386 each carry phosphothreonine.

This sequence belongs to the peptidase M24 family. Isoform 2 interacts with the cytoplasmic domain of non-phosphorylated ERBB3; the interaction requires PKC activity. Interacts with AR. Treatment with HRG leads to dissociation from ERBB3 and increases association with AR. Interacts with nucleolin/NCL. Component of a ribonucleoprotein complex containing at least PA2G4, NCL, TOP1, PABPC2, RPLP0, acetylated histone H1 (HIST1H1A or H1F1), histone H1 2/4, RPL4, RPL8, RPL15, RPL18, RPL18A, RPL21, RPL11, RPL12, RPL28, RPL27, RPLP2 and RPL24. Interacts with HDAC2. Interacts with RB1; the interaction is enhanced upon PA2G4 dephosphorylation. Isoform 1 and isoform 2 interact with RNF20. Isoform 2 interacts with HUWE1. Interacts with AKT1. Interacts with DNAJC21. Post-translationally, phosphorylated on serine and threonine residues. Phosphorylation is enhanced by HRG treatment. Basal phosphorylation is PKC-dependent and HRG-induced phosphorylation is predominantly PKC-independent. Phosphorylation at Ser-361 by PKC/PRKCD regulates its nucleolar localization. In terms of processing, isoform 2 is polyubiquitinated, leading to proteasomal degradation and phosphorylation by PKC/PRKCD enhances polyubiquitination.

The protein resides in the cytoplasm. The protein localises to the nucleus. It is found in the nucleolus. May play a role in a ERBB3-regulated signal transduction pathway. Seems be involved in growth regulation. Acts a corepressor of the androgen receptor (AR) and is regulated by the ERBB3 ligand neuregulin-1/heregulin (HRG). Inhibits transcription of some E2F1-regulated promoters, probably by recruiting histone acetylase (HAT) activity. Binds RNA. Associates with 28S, 18S and 5.8S mature rRNAs, several rRNA precursors and probably U3 small nucleolar RNA. May be involved in regulation of intermediate and late steps of rRNA processing. May be involved in ribosome assembly. Mediates cap-independent translation of specific viral IRESs (internal ribosomal entry site). Together with PTBP1 is required for the translation initiation on the foot-and-mouth disease virus (FMDV) IRES. Regulates cell proliferation, differentiation, and survival. Isoform 1 suppresses apoptosis whereas isoform 2 promotes cell differentiation. This is Proliferation-associated protein 2G4 (Pa2g4) from Rattus norvegicus (Rat).